The following is a 158-amino-acid chain: 6,7-dimethyl-8-ribityllumazine synthase (158 aa).

5-amino-6-(D-ribitylamino)uracil-binding positions include Phe-22, 56–58 (ALE), and 80–82 (VVI). A (2S)-2-hydroxy-3-oxobutyl phosphate-binding site is contributed by 85–86 (ET). The Proton donor role is filled by His-88. Position 113 (Asn-113) interacts with 5-amino-6-(D-ribitylamino)uracil. Arg-127 serves as a coordination point for (2S)-2-hydroxy-3-oxobutyl phosphate.

Belongs to the DMRL synthase family.

The enzyme catalyses (2S)-2-hydroxy-3-oxobutyl phosphate + 5-amino-6-(D-ribitylamino)uracil = 6,7-dimethyl-8-(1-D-ribityl)lumazine + phosphate + 2 H2O + H(+). Its pathway is cofactor biosynthesis; riboflavin biosynthesis; riboflavin from 2-hydroxy-3-oxobutyl phosphate and 5-amino-6-(D-ribitylamino)uracil: step 1/2. In terms of biological role, catalyzes the formation of 6,7-dimethyl-8-ribityllumazine by condensation of 5-amino-6-(D-ribitylamino)uracil with 3,4-dihydroxy-2-butanone 4-phosphate. This is the penultimate step in the biosynthesis of riboflavin. The protein is 6,7-dimethyl-8-ribityllumazine synthase of Neisseria meningitidis serogroup C (strain 053442).